A 99-amino-acid polypeptide reads, in one-letter code: Small ribosomal subunit protein bS21 (99 aa).

The disordered stretch occupies residues 60–99; sequence KKLQREGLLPMKPKPVFGAGPGGDRRGPGAGPGAGPRPAR.

Belongs to the bacterial ribosomal protein bS21 family.

The chain is Small ribosomal subunit protein bS21 from Rhodopseudomonas palustris (strain BisA53).